The following is a 406-amino-acid chain: MKNEVKKVVLAYSGGLDTSIILKWLQDEYNCEVVTFTADIGQGEELEPARKKALSLGIKEENIFIKDLRDEFVKDYVFPMFRANAIYEGEYLLGTSIARPLIAKTQAQIALQTGADAVSHGATGKGNDQVRFELGYLAFNPDLKIIAPWREWDLNSREKLLAYAQKHGIDISKKKGKSPYSMDANLLHISYEGLVLEDPAHAPEEDMWRWSKSPKDAPNESEIIELDFQKGDLVAINGEKLSPAGLLTKLNELGCKHGIGRLDIVENRYVGMKSRGCYETPGGTILLKAHRALESITLDREAAHLKDELMPKYASLIYNGYWFSPERMMLQALIDESQIHANGRVKLELYKGNVIVIGRESSNDSLFNAAYCTFEEDEVYNQKDAAGFIKLNALRFIIAGKNGRKF.

ATP contacts are provided by residues 11–19 and Ala-38; that span reads AYSGGLDTS. L-citrulline-binding residues include Tyr-91 and Ser-96. Gly-121 provides a ligand contact to ATP. Residues Thr-123, Asn-127, and Asp-128 each contribute to the L-aspartate site. An L-citrulline-binding site is contributed by Asn-127. 5 residues coordinate L-citrulline: Arg-131, Ser-181, Ser-190, Glu-266, and Tyr-278.

It belongs to the argininosuccinate synthase family. Type 1 subfamily. As to quaternary structure, homotetramer.

Its subcellular location is the cytoplasm. It carries out the reaction L-citrulline + L-aspartate + ATP = 2-(N(omega)-L-arginino)succinate + AMP + diphosphate + H(+). It functions in the pathway amino-acid biosynthesis; L-arginine biosynthesis; L-arginine from L-ornithine and carbamoyl phosphate: step 2/3. The polypeptide is Argininosuccinate synthase (Campylobacter jejuni (strain RM1221)).